Consider the following 201-residue polypeptide: 3-isopropylmalate dehydratase small subunit (201 aa).

The protein belongs to the LeuD family. LeuD type 1 subfamily. Heterodimer of LeuC and LeuD.

The catalysed reaction is (2R,3S)-3-isopropylmalate = (2S)-2-isopropylmalate. The protein operates within amino-acid biosynthesis; L-leucine biosynthesis; L-leucine from 3-methyl-2-oxobutanoate: step 2/4. Catalyzes the isomerization between 2-isopropylmalate and 3-isopropylmalate, via the formation of 2-isopropylmaleate. In Cereibacter sphaeroides (strain KD131 / KCTC 12085) (Rhodobacter sphaeroides), this protein is 3-isopropylmalate dehydratase small subunit.